A 378-amino-acid polypeptide reads, in one-letter code: Queuine tRNA-ribosyltransferase (378 aa).

The active-site Proton acceptor is the D89. Substrate-binding positions include 89-93 (DSGGF), D143, Q187, and G214. Residues 245 to 251 (GVGKPED) form an RNA binding region. Catalysis depends on D264, which acts as the Nucleophile. The tract at residues 269–273 (TRNAR) is RNA binding; important for wobble base 34 recognition. Residues C302, C304, C307, and H333 each coordinate Zn(2+).

The protein belongs to the queuine tRNA-ribosyltransferase family. In terms of assembly, homodimer. Within each dimer, one monomer is responsible for RNA recognition and catalysis, while the other monomer binds to the replacement base PreQ1. It depends on Zn(2+) as a cofactor.

It catalyses the reaction 7-aminomethyl-7-carbaguanine + guanosine(34) in tRNA = 7-aminomethyl-7-carbaguanosine(34) in tRNA + guanine. It functions in the pathway tRNA modification; tRNA-queuosine biosynthesis. Functionally, catalyzes the base-exchange of a guanine (G) residue with the queuine precursor 7-aminomethyl-7-deazaguanine (PreQ1) at position 34 (anticodon wobble position) in tRNAs with GU(N) anticodons (tRNA-Asp, -Asn, -His and -Tyr). Catalysis occurs through a double-displacement mechanism. The nucleophile active site attacks the C1' of nucleotide 34 to detach the guanine base from the RNA, forming a covalent enzyme-RNA intermediate. The proton acceptor active site deprotonates the incoming PreQ1, allowing a nucleophilic attack on the C1' of the ribose to form the product. After dissociation, two additional enzymatic reactions on the tRNA convert PreQ1 to queuine (Q), resulting in the hypermodified nucleoside queuosine (7-(((4,5-cis-dihydroxy-2-cyclopenten-1-yl)amino)methyl)-7-deazaguanosine). The polypeptide is Queuine tRNA-ribosyltransferase (Aeromonas hydrophila subsp. hydrophila (strain ATCC 7966 / DSM 30187 / BCRC 13018 / CCUG 14551 / JCM 1027 / KCTC 2358 / NCIMB 9240 / NCTC 8049)).